Reading from the N-terminus, the 521-residue chain is GMP synthase [glutamine-hydrolyzing] (521 aa).

One can recognise a Glutamine amidotransferase type-1 domain in the interval 5 to 197 (KILILDFGSQ…VLDICGAQPG (193 aa)). Cys-81 functions as the Nucleophile in the catalytic mechanism. Catalysis depends on residues His-171 and Glu-173. Residues 198 to 390 (WTMPNYIEEA…LGLPREMVYR (193 aa)) form the GMPS ATP-PPase domain. 225-231 (SGGVDSS) serves as a coordination point for ATP.

Homodimer.

The enzyme catalyses XMP + L-glutamine + ATP + H2O = GMP + L-glutamate + AMP + diphosphate + 2 H(+). It participates in purine metabolism; GMP biosynthesis; GMP from XMP (L-Gln route): step 1/1. Its function is as follows. Catalyzes the synthesis of GMP from XMP. The sequence is that of GMP synthase [glutamine-hydrolyzing] (guaA) from Neisseria meningitidis serogroup A / serotype 4A (strain DSM 15465 / Z2491).